Reading from the N-terminus, the 486-residue chain is MERQPKSLSDAVQLLQTTEIISKCTQTIIAEWSNEAETFKKRASSGRAGAELVLPSHELFNAQRTITAAIGKLIELVSEPSVRILEIAGQYQESRALYIAVERRIPDILASQDNEGGMPVKELSSRTGIEYRKLSRILRYLCSMGTFRQVGPDVFANNTISACLVANEPLRAYVRLTGSEAFTASDRLPKTLLDPSTGPSYDVTRTAWQDAIGTTKPRWEWIEERVEPDKLLDSGYHYPGIPSLILEPQPPGEDGLVARPELEIMGLAMVGGGRVFGAAHVFDFPWASLDNALVVDVGGGVGGFALQLSKVYPDLRFVIQDRGPVIQQALESVWPNENPAALKDQRVQFMEHSFFDKNPVEGADVYYLRYVLHDWSDDYCVNILSHIRESMAPHSRLLICEQVMNTTIGDPDLTSAPAPLPANYGFHARFSHSRDLTMMAAINGIERTPEEFKTILKSAGLALKQIWECRSQVSLLEAVRADARTA.

Residues 298-299, Asp321, 353-354, and Arg369 each bind S-adenosyl-L-methionine; these read GG and SF. Residue His373 is the Proton acceptor of the active site.

It belongs to the class I-like SAM-binding methyltransferase superfamily. Cation-independent O-methyltransferase family.

It catalyses the reaction emodin + S-adenosyl-L-methionine = questin + S-adenosyl-L-homocysteine + H(+). Its pathway is secondary metabolite biosynthesis. In terms of biological role, O-methyltransferase; part of the gene cluster that mediates the biosynthesis of geodin, an intermediate in the biosynthesis of other natural products. The pathway begins with the synthesis of atrochrysone thioester by the polyketide synthase (PKS) gedC. The atrochrysone carboxyl ACP thioesterase gedB then breaks the thioester bond and releases the atrochrysone carboxylic acid from gedC. The atrochrysone carboxylic acid is then converted to atrochrysone which is further transformed into emodinanthrone. The next step is performed by the emodinanthrone oxygenase gedH that catalyzes the oxidation of emodinanthrone to emodin. Emodin O-methyltransferase encoded probably by gedA then catalyzes methylation of the 8-hydroxy group of emodin to form questin. Ring cleavage of questin by questin oxidase gedK leads to desmethylsulochrin via several intermediates including questin epoxide. Another methylation step probably catalyzed by methyltransferase gedG leads to the formation of sulochrin which is further converted to dihydrogeodin by the sulochrin halogenase gedL. Finally, the dihydrogeodin oxidase gedJ catalyzes the stereospecific phenol oxidative coupling reaction converting dihydrogeodin to geodin. The protein is O-methyltransferase gedA of Aspergillus terreus (strain NIH 2624 / FGSC A1156).